An 818-amino-acid polypeptide reads, in one-letter code: H(+)/Cl(-) exchange transporter 3 (818 aa).

Residues 1-125 (MESEQLFHRG…WEMTKSLYDA (125 aa)) lie on the Cytoplasmic side of the membrane. Residues 13 to 17 (RNSYN) carry the Di-leucine internalization motif; mediates targeting to late endosome and lysosome membranes motif. The short motif at 18-19 (SI) is the IP motif; mediates targeting to recycling endosomes element. Short sequence motifs (di-leucine internalization motif; mediates targeting to late endosome and lysosome membranes) lie at residues 28-29 (LL), 46-47 (LL), and 71-75 (LLDLL). The helical transmembrane segment at 126-163 (WSGWLVVTLTGLASGALAGLIDIAADWMTDLKEGICLS) threads the bilayer. Asparagine 177 carries N-linked (GlcNAc...) asparagine glycosylation. Residues 209-232 (MNYIMYIFWALSFAFLAVSLVKVF) traverse the membrane as a helical segment. A Selectivity filter part_1 motif is present at residues 238–242 (GSGIP). Residue serine 239 coordinates chloride. The segment at residues 241-248 (IPEIKTIL) is an intramembrane region (helical). 2 helical membrane passes run 258–276 (GKWTLMIKTITLVLAVASG) and 282–301 (EGPLVHVACCCGNIFSYLFP). The Selectivity filter part_2 motif lies at 280-284 (GKEGP). 2 consecutive intramembrane regions (helical) follow at residues 313–325 (VLSAASAAGVSVA) and 329–337 (PIGGVLFSL). A run of 3 helical transmembrane segments spans residues 349-367 (LWRSFFAALVAAFVLRSIN), 391-416 (FPFILLGVFGGLWGAFFIRANIAWCR), and 423-443 (FGKYPVLEVIIVAAITAVIAF). 2 N-linked (GlcNAc...) asparagine glycosylation sites follow: asparagine 451 and asparagine 479. 2 helical membrane passes run 500 to 520 (IWQLCLALIFKIIMTVFTFGI) and 525 to 544 (GLFIPSMAIGAIAGRIVGIA). Residues 525-529 (GLFIP) carry the Selectivity filter part_3 motif. Phenylalanine 527 is a chloride binding site. Intramembrane regions (helical) lie at residues 572-586 (GLYAMVGAAACLGGV) and 590-601 (TVSLVVIVFELT). The note=Loop between two helices intramembrane region spans 602-605 (GGLE). A helical transmembrane segment spans residues 606–624 (YIVPLMAAVMTSKWVGDAF). Over 625-818 (GREGIYEAHI…NQDPASIMFN (194 aa)) the chain is Cytoplasmic. Chloride is bound at residue tyrosine 630. CBS domains follow at residues 658 to 722 (MRPR…ARKK) and 755 to 812 (LDMS…NQDP). ATP contacts are provided by residues 689-691 (YNG) and 796-799 (TKKD).

Belongs to the chloride channel (TC 2.A.49) family. ClC-3/CLCN3 subfamily. Monomer and homodimer. Forms heterodimers with CLCN4. N-glycosylated. In terms of tissue distribution, detected in kidney, in the apical part of proximal tubule cells (at protein level). Expressed at high levels in the kidney while a low level expression is seen in the brain. Within the brain, it is prominent in the hippocampus, cerebral cortex and olfactory bulb. As to expression, brain, pancreas, kidney, liver, lung, retina, olfactory bulb, and spinal cord. Pancreas, kidney, liver, lung and retina. In terms of tissue distribution, brain, heart, pancreas, kidney, liver, lung, retina, olfactory bulb, and spinal cord. As to expression, expressed at high levels in the liver and at low levels in the brain.

It is found in the cytoplasmic vesicle. The protein localises to the secretory vesicle membrane. Its subcellular location is the lysosome membrane. The protein resides in the late endosome membrane. It localises to the cell membrane. It is found in the early endosome membrane. The protein localises to the recycling endosome membrane. Inhibited by Cd(2+). In terms of biological role, may influence large dense-core vesicle exocytosis in adrenal chromaffin cells. Strongly outwardly rectifying, electrogenic H(+)/Cl(-)exchanger which mediates the exchange of chloride ions against protons. The CLC channel family contains both chloride channels and proton-coupled anion transporters that exchange chloride or another anion for protons. The presence of conserved gating glutamate residues is typical for family members that function as antiporters. Functionally, strongly outwardly rectifying, electrogenic H(+)/Cl(-)exchanger which mediates the exchange of chloride ions against protons. Facilitates endosomal acidification and chloride accumulation in hepatocytes. Its function is as follows. Strongly outwardly rectifying, electrogenic H(+)/Cl(-)exchanger which mediates the exchange of chloride ions against protons. This Mus musculus (Mouse) protein is H(+)/Cl(-) exchange transporter 3 (Clcn3).